A 774-amino-acid polypeptide reads, in one-letter code: Beta-D-xylosidase 1 (774 aa).

A signal peptide spans methionine 1–serine 30. The N-linked (GlcNAc...) asparagine glycan is linked to asparagine 131. Residue aspartate 296 is part of the active site. N-linked (GlcNAc...) asparagine glycosylation occurs at asparagine 658.

It belongs to the glycosyl hydrolase 3 family. Expressed in leaves, stems, seedlings, roots, inflorescences, siliques and developing seeds. Expressed in the vasculature of the roots, leaves, flowers and silique. Expressed in tissues undergoing secondary cell wall thickening such as protoxylem, metaxylem, intrafascicular cambium and fibers.

It is found in the secreted. It localises to the extracellular space. Its subcellular location is the extracellular matrix. It carries out the reaction Hydrolysis of terminal non-reducing alpha-L-arabinofuranoside residues in alpha-L-arabinosides.. Functionally, involved in pectic arabinan modification in mucilage secretory cells. Also acts as a beta-D-xylosidase during the remodeling of xylans in vascular development. This chain is Beta-D-xylosidase 1 (BXL1), found in Arabidopsis thaliana (Mouse-ear cress).